The chain runs to 249 residues: MAPSRKFFVGGNWKMNGRKQSLGELIGTLNAAKVPADTKVVCAPPTAYIDFARQKLDPKIAVAAQNCYKVTNGAFTGEISPGMIKDCGATWVVLGHSERRHVFGESDELIGQKVAHALAEGLGVIACIGEKLDEREAGITEKVVFEQTKVITDNVKDWSKVVLAYEPVWAIGTGKTATPQQAQEVHEKLRGWLKSNVSDAVAQSTRIIYGGSVTGATCKELASQPDVDGFLVGGASLKPEFVDIINAKQ.

Substrate-binding residues include Asn-12 and Lys-14. Lys-14 is subject to N6-acetyllysine. The residue at position 68 (Tyr-68) is a 3'-nitrotyrosine. Ser-80 is subject to Phosphoserine. His-96 functions as the Electrophile in the catalytic mechanism. Ser-106 carries the phosphoserine modification. Lys-142 participates in a covalent cross-link: Glycyl lysine isopeptide (Lys-Gly) (interchain with G-Cter in SUMO1). Lys-149 bears the N6-succinyllysine mark. Lys-156 carries the post-translational modification N6-acetyllysine; alternate. Lys-156 carries the post-translational modification N6-succinyllysine; alternate. Ser-159 is subject to Phosphoserine. Catalysis depends on Glu-166, which acts as the Proton acceptor. A Phosphothreonine modification is found at Thr-173. N6-acetyllysine; alternate is present on Lys-194. An N6-succinyllysine; alternate modification is found at Lys-194. Lys-194 is subject to N6-methyllysine; alternate. Ser-198 bears the Phosphoserine mark. 3'-nitrotyrosine is present on Tyr-209. Residue Ser-212 is modified to Phosphoserine. Position 214 is a phosphothreonine (Thr-214). A Phosphoserine modification is found at Ser-223. Lys-238 carries the N6-acetyllysine modification.

It belongs to the triosephosphate isomerase family. As to quaternary structure, homodimer.

It is found in the cytoplasm. It catalyses the reaction dihydroxyacetone phosphate = methylglyoxal + phosphate. It carries out the reaction D-glyceraldehyde 3-phosphate = dihydroxyacetone phosphate. It functions in the pathway carbohydrate degradation; glycolysis; D-glyceraldehyde 3-phosphate from glycerone phosphate: step 1/1. The protein operates within carbohydrate biosynthesis; gluconeogenesis. Triosephosphate isomerase is an extremely efficient metabolic enzyme that catalyzes the interconversion between dihydroxyacetone phosphate (DHAP) and D-glyceraldehyde-3-phosphate (G3P) in glycolysis and gluconeogenesis. Functionally, it is also responsible for the non-negligible production of methylglyoxal a reactive cytotoxic side-product that modifies and can alter proteins, DNA and lipids. The polypeptide is Triosephosphate isomerase (TPI1) (Gorilla gorilla gorilla (Western lowland gorilla)).